The primary structure comprises 205 residues: tRNA (guanine-N(7)-)-methyltransferase (205 aa).

Positions 36, 61, 88, and 109 each coordinate S-adenosyl-L-methionine. The active site involves D109. K113 provides a ligand contact to substrate. Positions 115–120 (RHEKRR) are interaction with RNA. Residues D145 and 183 to 186 (TGYE) contribute to the substrate site.

This sequence belongs to the class I-like SAM-binding methyltransferase superfamily. TrmB family.

The catalysed reaction is guanosine(46) in tRNA + S-adenosyl-L-methionine = N(7)-methylguanosine(46) in tRNA + S-adenosyl-L-homocysteine. It functions in the pathway tRNA modification; N(7)-methylguanine-tRNA biosynthesis. Its function is as follows. Catalyzes the formation of N(7)-methylguanine at position 46 (m7G46) in tRNA. This Mycoplasmopsis agalactiae (strain NCTC 10123 / CIP 59.7 / PG2) (Mycoplasma agalactiae) protein is tRNA (guanine-N(7)-)-methyltransferase.